The chain runs to 189 residues: ATP-dependent protease subunit HslV (189 aa).

Thr-12 is a catalytic residue. Na(+) contacts are provided by Ala-172, Cys-175, and Thr-178.

Belongs to the peptidase T1B family. HslV subfamily. In terms of assembly, a double ring-shaped homohexamer of HslV is capped on each side by a ring-shaped HslU homohexamer. The assembly of the HslU/HslV complex is dependent on binding of ATP.

Its subcellular location is the cytoplasm. It carries out the reaction ATP-dependent cleavage of peptide bonds with broad specificity.. With respect to regulation, allosterically activated by HslU binding. Protease subunit of a proteasome-like degradation complex believed to be a general protein degrading machinery. The sequence is that of ATP-dependent protease subunit HslV from Anaplasma phagocytophilum (strain HZ).